A 287-amino-acid polypeptide reads, in one-letter code: ATP synthase gamma chain (287 aa).

This sequence belongs to the ATPase gamma chain family. In terms of assembly, F-type ATPases have 2 components, CF(1) - the catalytic core - and CF(0) - the membrane proton channel. CF(1) has five subunits: alpha(3), beta(3), gamma(1), delta(1), epsilon(1). CF(0) has three main subunits: a, b and c.

The protein resides in the cell inner membrane. In terms of biological role, produces ATP from ADP in the presence of a proton gradient across the membrane. The gamma chain is believed to be important in regulating ATPase activity and the flow of protons through the CF(0) complex. The protein is ATP synthase gamma chain of Photorhabdus laumondii subsp. laumondii (strain DSM 15139 / CIP 105565 / TT01) (Photorhabdus luminescens subsp. laumondii).